The sequence spans 869 residues: Structure-specific endonuclease subunit SLX4 (869 aa).

Positions 40–59 are enriched in low complexity; it reads SPLSLPSPTSLLDFLSTSTS. Disordered stretches follow at residues 40-79, 92-116, 165-199, 293-323, 351-388, 418-437, and 630-774; these read SPLS…EVLD, NRVV…ESPG, KANQ…INDL, GLSD…NPPK, TLLS…KKNE, ANGH…HISN, and KTSN…ASET. Residues 63–79 are compositionally biased toward basic and acidic residues; it reads ARSDTDGDKTQGKEVLD. Polar residues-rich tracts occupy residues 165-174 and 294-311; these read KANQTVSLQP and LSDS…SATS. Residues 312-322 are compositionally biased toward basic residues; sequence KPRRVKAKNPP. 2 stretches are compositionally biased toward polar residues: residues 647-657 and 664-673; these read VDESTQGQSLG and SIPQTATTQV. Positions 688–700 are enriched in low complexity; it reads VPVPSRRSTSTSK. Residues 765-774 show a composition bias toward polar residues; sequence IPSTGTASET.

The protein belongs to the SLX4 family. As to quaternary structure, forms a heterodimer with SLX1. Post-translationally, phosphorylated in response to DNA damage.

The protein resides in the nucleus. Its function is as follows. Regulatory subunit of the SLX1-SLX4 structure-specific endonuclease that resolves DNA secondary structures generated during DNA repair and recombination. Has endonuclease activity towards branched DNA substrates, introducing single-strand cuts in duplex DNA close to junctions with ss-DNA. This Paracoccidioides brasiliensis (strain Pb18) protein is Structure-specific endonuclease subunit SLX4.